Here is a 234-residue protein sequence, read N- to C-terminus: Preprocaerulein type-4 (234 aa).

The signal sequence occupies residues 1–26 (MFKGILLCVLFAVLSANPLSQPEGFA). A propeptide spanning residues 27–73 (DEEERDVRGLASLLGKALKAALKIGANALGGSPQQREANDERRFADG) is cleaved from the precursor. Tyrosine 77 is subject to Sulfotyrosine. Phenylalanine 83 carries the phenylalanine amide modification. A propeptide spanning residues 87–137 (DDEDDVNERDVRGFGSFLGKALKAGLKIGTHFLGGAPQQREANDERRFADG) is cleaved from the precursor. Tyrosine 141 is subject to Sulfotyrosine. A Phenylalanine amide modification is found at phenylalanine 147. A propeptide spanning residues 151-152 (DG) is cleaved from the precursor. The residue at position 156 (tyrosine 156) is a Sulfotyrosine. Phenylalanine 162 is subject to Phenylalanine amide. A propeptide spanning residues 166–216 (DDEDDVHERDVRGFGSFLGKALKAALKIGANALGGSPQQREANDERRFADG) is cleaved from the precursor. Residues 198–234 (LGGSPQQREANDERRFADGQQDYTGWMDFGRRNGEDD) form a disordered region. Tyrosine 220 is subject to Sulfotyrosine. A Phenylalanine amide modification is found at phenylalanine 226. The propeptide occupies 230 to 234 (NGEDD).

The protein belongs to the gastrin/cholecystokinin family. As to expression, expressed by the skin glands.

The protein localises to the secreted. Functionally, the pharmacological activities of caerulein are quite similar to the physiological activities of gastrin and related peptides. In Xenopus borealis (Kenyan clawed frog), this protein is Preprocaerulein type-4.